Consider the following 538-residue polypeptide: Protein NRT1/ PTR FAMILY 5.11 (538 aa).

Transmembrane regions (helical) follow at residues 44–64 (FAYF…LGES) and 74–94 (AWTG…DSYL). T99 bears the Phosphothreonine mark. A run of 10 helical transmembrane segments spans residues 100-120 (IIIS…STMI), 134-154 (TIFF…NPCI), 175-194 (SFFN…TRLV), 204-224 (WSLG…LFLL), 308-328 (IPIW…PTFF), 342-362 (GLLV…VVFI), 389-409 (IGTG…VETK), 424-444 (VWWL…TMVG), 463-483 (ALNL…ISVI), and 507-527 (YFYW…LWFA).

This sequence belongs to the major facilitator superfamily. Proton-dependent oligopeptide transporter (POT/PTR) (TC 2.A.17) family. As to expression, expressed in shoots and roots.

It localises to the membrane. The sequence is that of Protein NRT1/ PTR FAMILY 5.11 (NPF5.11) from Arabidopsis thaliana (Mouse-ear cress).